The sequence spans 440 residues: MVPEPGPVNSSTPAWGPGPPPAPGGSGWVAAALCVVIVLTAAANSLLIALICTQPALRNTSNFFLVSLFTSDLMVGLVVMPPAMLNALYGRWVLARGLCLLWTAFDVMCCSASILNLCLISLDRYLLILSPLRYKLRMTAPRALALILGAWSLAALASFLPLLLGWHELGKARTSAPGQCRLLASLPYVLVASGVTFFLPSGAICFTYCRILLAARKQAVQVASLTTGTATAGQALETLQVPRTPRPGMESADSRRLTTKHSRKALKASLTLGILLSMFFVTWLPFFVASIAQAVCDCISPGLFDVLTWLGYCNSTMNPIIYPLFMRDFKRALGRFVPCVHCPPEHRASPASPSMWTSHSGARPGLSLQQVLPLPLPPNSDSDSASGGTSGLQLTAQLLLPGEATRDPPPPTRAPTVVNFFVTDSVEPEIRQHPLGSPMN.

At 1–27 the chain is on the extracellular side; that stretch reads MVPEPGPVNSSTPAWGPGPPPAPGGSG. N-linked (GlcNAc...) asparagine glycosylation is present at N9. Residues 28-52 form a helical membrane-spanning segment; that stretch reads WVAAALCVVIVLTAAANSLLIALIC. The Cytoplasmic portion of the chain corresponds to 53–62; sequence TQPALRNTSN. Residues 63 to 88 traverse the membrane as a helical segment; it reads FFLVSLFTSDLMVGLVVMPPAMLNAL. Over 89–96 the chain is Extracellular; sequence YGRWVLAR. Residues 97–122 form a helical membrane-spanning segment; the sequence is GLCLLWTAFDVMCCSASILNLCLISL. C99 and C180 are oxidised to a cystine. D106 serves as a coordination point for serotonin. Residues 123–142 are Cytoplasmic-facing; the sequence is DRYLLILSPLRYKLRMTAPR. Residues 143–167 form a helical membrane-spanning segment; the sequence is ALALILGAWSLAALASFLPLLLGWH. The Extracellular portion of the chain corresponds to 168 to 185; the sequence is ELGKARTSAPGQCRLLAS. A helical transmembrane segment spans residues 186–209; the sequence is LPYVLVASGVTFFLPSGAICFTYC. Over 210–268 the chain is Cytoplasmic; the sequence is RILLAARKQAVQVASLTTGTATAGQALETLQVPRTPRPGMESADSRRLTTKHSRKALKA. A helical membrane pass occupies residues 269–295; sequence SLTLGILLSMFFVTWLPFFVASIAQAV. Over 296–301 the chain is Extracellular; that stretch reads CDCISP. The chain crosses the membrane as a helical span at residues 302-325; that stretch reads GLFDVLTWLGYCNSTMNPIIYPLF. At 326 to 440 the chain is on the cytoplasmic side; sequence MRDFKRALGR…RQHPLGSPMN (115 aa).

The protein belongs to the G-protein coupled receptor 1 family. Interacts with CDK5. Interacts with MTOR. Interacts with RPTOR and NF1.

The protein resides in the cell membrane. G-protein coupled receptor for 5-hydroxytryptamine (serotonin), a biogenic hormone that functions as a neurotransmitter, a hormone and a mitogen. Also has a high affinity for tricyclic psychotropic drugs. Ligand binding causes a conformation change that triggers signaling via guanine nucleotide-binding proteins (G proteins) and modulates the activity of downstream effectors. HTR6 is coupled to G(s) G alpha proteins and mediates activation of adenylate cyclase activity. Controls pyramidal neurons migration during corticogenesis, through the regulation of CDK5 activity. Is an activator of mTOR signaling. The sequence is that of 5-hydroxytryptamine receptor 6 from Mus musculus (Mouse).